A 205-amino-acid polypeptide reads, in one-letter code: Probable 3'-5' exonuclease KapD (205 aa).

Residues 6–173 enclose the Exonuclease domain; it reads LLIIDFEFTM…DDALTAYKLF (168 aa). Residues D10, E12, and D104 each contribute to the Mg(2+) site. Catalysis depends on E12, which acts as the Proton acceptor. Residue E12 participates in AMP binding. The active-site Proton acceptor is H160. Residue H160 participates in AMP binding. D165 contacts Mg(2+).

Requires Mg(2+) as cofactor.

Specifically inhibits the KinA pathway to sporulation. The polypeptide is Probable 3'-5' exonuclease KapD (kapD) (Bacillus subtilis (strain 168)).